The chain runs to 538 residues: Furcatin hydrolase (538 aa).

A chloroplast-targeting transit peptide spans 1 to 66 (MATITTLASS…NFNKDNWLAS (66 aa)). The interval 18-37 (SFPGGSSRKPKKDNLSIKPP) is disordered. Residues Q88, H192, and 237-238 (NE) each bind a beta-D-glucoside. The active-site Proton donor is the E238. Residues C257 and C260 are joined by a disulfide bond. A beta-D-glucoside contacts are provided by residues Y376, E447, W494, 501–502 (EW), and F510. E447 serves as the catalytic Nucleophile.

This sequence belongs to the glycosyl hydrolase 1 family. In terms of tissue distribution, expressed in young and mature leaves, but not in fruit and stem.

It localises to the plastid. The protein resides in the chloroplast. The catalysed reaction is 7-[beta-D-apiofuranosyl-(1-&gt;6)-beta-D-glucopyranosyloxy]isoflavonoid + H2O = a 7-hydroxyisoflavonoid + beta-D-apiofuranosyl-(1-&gt;6)-D-glucose.. In terms of biological role, disaccharide-specific acuminosidase, hydrolyzes the beta-glycosidic bond between p-allylphenol and acuminose with retention of anomeric configuration. Has highest activity towards furcatin, and lower activity towards beta-primeverosides and beta-vicianoside. Has very low activity towards beta-gentobiosides. The sequence is that of Furcatin hydrolase from Viburnum furcatum (Scarlet leaved viburnum).